The following is a 628-amino-acid chain: Patulin synthase (628 aa).

The N-terminal stretch at 1–20 is a signal peptide; sequence MRPIPSILGALGAFATLSAA. Residue Asn-48 is glycosylated (N-linked (GlcNAc...) asparagine). Residues 60 to 61 and 81 to 82 contribute to the FAD site; these read TA and EA. The N-linked (GlcNAc...) asparagine glycan is linked to Asn-92. 147 to 150 serves as a coordination point for FAD; sequence NYMA. Asn-197, Asn-260, Asn-386, Asn-429, and Asn-486 each carry an N-linked (GlcNAc...) asparagine glycan. Residue His-564 is the Proton acceptor of the active site. FAD contacts are provided by residues Ala-598 and 609–610; that span reads PQ.

Belongs to the GMC oxidoreductase family. In terms of assembly, homodimer. The cofactor is FAD.

It is found in the cytoplasm. Its subcellular location is the cell cortex. It localises to the vacuole. The protein resides in the secreted. The protein localises to the cell wall. The enzyme catalyses (E)-ascladiol + A = patulin + AH2. Its pathway is mycotoxin biosynthesis; patulin biosynthesis. Its function is as follows. Patulin synthase; part of the gene cluster that mediates the biosynthesis of patulin, an acetate-derived tetraketide mycotoxin produced by several fungal species that shows antimicrobial properties against several bacteria. PatE catalyzes the last step of the pathway which is the conversion of E-ascladiol to patulin. The pathway begins with the synthesis of 6-methylsalicylic acid by the polyketide synthase (PKS) patK via condensation of acetate and malonate units. The 6-methylsalicylic acid decarboxylase patG then catalyzes the decarboxylation of 6-methylsalicylic acid to yield m-cresol (also known as 3-methylphenol). These first reactions occur in the cytosol. The intermediate m-cresol is then transported into the endoplasmic reticulum where the cytochrome P450 monooxygenase patH converts it to m-hydroxybenzyl alcohol, which is further converted to gentisyl alcohol by the cytochrome P450 monooxygenase patI. The oxidoreductases patJ and patO further convert gentisyl alcohol to isoepoxydon in the vacuole. PatN catalyzes then the transformation of isoepoxydon into phyllostine. The cluster protein patF is responsible for the conversion from phyllostine to neopatulin whereas the alcohol dehydrogenase patD converts neopatulin to E-ascladiol. The steps between isoepoxydon and E-ascladiol occur in the cytosol, and E-ascladiol is probably secreted to the extracellular space by one of the cluster-specific transporters patC or patM. Finally, the secreted patulin synthase patE catalyzes the conversion of E-ascladiol to patulin. The protein is Patulin synthase of Aspergillus clavatus (strain ATCC 1007 / CBS 513.65 / DSM 816 / NCTC 3887 / NRRL 1 / QM 1276 / 107).